Reading from the N-terminus, the 505-residue chain is MAQIDFRKKINWHRRYRSPQGVKTEHEILRIFESDRGRIINSPAIRRLQQKTQVFPLERNAAVRTRLTHSMEVQQVGRYIAKEILSRLKELKLLEAYGLDELTGPFESIVEMSCLMHDIGNPPFGHFGEAAINDWFRQRLYPEDAESQPLTDDRCSVAALRLRDGEEPLNALRRKIRQDLCHFEGNAQGIRLVHTLMRMNLTWAQVGGILKYTRPAWWRGETPETHHYLMKKPGYYLSEEAYIARLRKELNLALYSRFPLTWIMEAADDISYCVADLEDAVEKRIFTVEQLYHHLHEAWGQHEKGSLFSLVVENAWEKSRSNSLSRSTEDQFFMYLRVNTLNKLVPYAAQRFIDNLPAIFAGTFNHALLEDASECSDLLKLYKNVAVKHVFSHPDVEQLELQGYRVISGLLEIYRPLLNLPLSDFTELVEKERVKRFPIETRLFHKLSTRHRLAYVEAVSKLPSDSPEFPLWEYYYRCRLLQDYISGMTDLYAWDEYRRLMAVEQ.

Residues 66-273 form the HD domain; sequence RLTHSMEVQQ…MEAADDISYC (208 aa).

This sequence belongs to the dGTPase family. Type 1 subfamily. As to quaternary structure, homotetramer. Mg(2+) serves as cofactor.

It catalyses the reaction dGTP + H2O = 2'-deoxyguanosine + triphosphate + H(+). Functionally, dGTPase preferentially hydrolyzes dGTP over the other canonical NTPs. The sequence is that of Deoxyguanosinetriphosphate triphosphohydrolase from Escherichia coli O81 (strain ED1a).